We begin with the raw amino-acid sequence, 378 residues long: Sphingosine 1-phosphate receptor 3 (378 aa).

Residues 1 to 40 lie on the Extracellular side of the membrane; it reads MATALPPRLQPVRGNETLREHYQYVGKLAGRLKEASEGST. N-linked (GlcNAc...) asparagine glycosylation is present at N15. The helical transmembrane segment at 41-65 threads the bilayer; it reads LTTVLFLVICSFIVLENLMVLIAIW. Residues 66–72 lie on the Cytoplasmic side of the membrane; the sequence is KNNKFHN. The helical transmembrane segment at 73-101 threads the bilayer; the sequence is RMYFFIGNLALCDLLAGIAYKVNILMSGK. The Extracellular portion of the chain corresponds to 102-115; that stretch reads KTFSLSPTVWFLRE. Residues 116–134 form a helical membrane-spanning segment; sequence GSMFVALGASTCSLLAIAI. At 135–153 the chain is on the cytoplasmic side; sequence ERHLTMIKMRPYDANKRHR. Residues 154-179 traverse the membrane as a helical segment; sequence VFLLIGMCWLIAFTLGALPILGWNCL. Topologically, residues 180 to 195 are extracellular; the sequence is HNLPDCSTILPLYSKK. The chain crosses the membrane as a helical span at residues 196 to 216; sequence YIAFCISIFTAILVTIVILYA. Residues 217–243 lie on the Cytoplasmic side of the membrane; it reads RIYFLVKSSSRKVANHNNSERSMALLR. The chain crosses the membrane as a helical span at residues 244–265; it reads TVVIVVSVFIACWSPLFILFLI. The Extracellular portion of the chain corresponds to 266-281; sequence DVACRVQACPILFKAQ. A helical transmembrane segment spans residues 282–302; that stretch reads WFIVLAVLNSAMNPVIYTLAS. At 303–378 the chain is on the cytoplasmic side; that stretch reads KEMRRAFFRL…AALQNGIFCN (76 aa). Residue S326 is modified to Phosphoserine. The disordered stretch occupies residues 327-357; sequence PIQPALDPSRSKSSSSNNSSHSPKVKEDLPH. The span at 337–348 shows a compositional bias: low complexity; sequence SKSSSSNNSSHS.

The protein belongs to the G-protein coupled receptor 1 family. Expressed in all tissues, but most abundantly in heart, placenta, kidney, and liver.

Its subcellular location is the cell membrane. Its function is as follows. Receptor for the lysosphingolipid sphingosine 1-phosphate (S1P). S1P is a bioactive lysophospholipid that elicits diverse physiological effect on most types of cells and tissues. When expressed in rat HTC4 hepatoma cells, is capable of mediating S1P-induced cell proliferation and suppression of apoptosis. The polypeptide is Sphingosine 1-phosphate receptor 3 (Homo sapiens (Human)).